A 613-amino-acid chain; its full sequence is 8-methylmenaquinol:fumarate reductase flavoprotein subunit (613 aa).

Positions 1 to 33 (MSEQFTRREFLQSACITMGALAVSTSGVDRAFA) form a signal peptide, tat-type signal. Residues 53-58 (GSGAAG), 78-93 (SKVM…AEGG), and Asp255 each bind FAD. Substrate-binding residues include His276 and Thr288. The Proton acceptor role is filled by Arg319. His387 contacts substrate. Residue Glu413 coordinates FAD. Arg424 is a binding site for substrate. 429-430 (SL) is an FAD binding site.

Belongs to the FAD-dependent oxidoreductase 2 family. FRD/SDH subfamily. In terms of assembly, the MFR complex is composed of three subunits: a flavoprotein (SdhA), an iron-sulfur protein (SdhB), and one hydrophobic anchor protein (SdhE). FAD serves as cofactor. Post-translationally, predicted to be exported by the Tat system. The position of the signal peptide cleavage has not been experimentally proven.

Its subcellular location is the periplasm. The protein resides in the cell membrane. The catalysed reaction is 8-methylmenaquinone-6 + succinate = 8-methylmenaquinol-6 + fumarate. Its function is as follows. Flavoprotein subunit of 8-methylmenaquinol:fumarate reductase (MFR), that catalyzes the reduction of fumarate using 8-methylmenaquinol-6 as electron donor. The complex shows no succinate oxidation activity. Is involved in anaerobic metabolism. SdhA contains the dicarboxylate reduction site. The protein is 8-methylmenaquinol:fumarate reductase flavoprotein subunit of Wolinella succinogenes (strain ATCC 29543 / DSM 1740 / CCUG 13145 / JCM 31913 / LMG 7466 / NCTC 11488 / FDC 602W) (Vibrio succinogenes).